The following is an 857-amino-acid chain: DNA mismatch repair protein MutS (857 aa).

Position 621 to 628 (621 to 628 (GPNMGGKS)) interacts with ATP.

It belongs to the DNA mismatch repair MutS family.

In terms of biological role, this protein is involved in the repair of mismatches in DNA. It is possible that it carries out the mismatch recognition step. This protein has a weak ATPase activity. This Francisella tularensis subsp. tularensis (strain SCHU S4 / Schu 4) protein is DNA mismatch repair protein MutS.